Here is a 376-residue protein sequence, read N- to C-terminus: Queuine tRNA-ribosyltransferase (376 aa).

Catalysis depends on Asp93, which acts as the Proton acceptor. Substrate-binding positions include 93–97, Asp147, Gln190, and Gly217; that span reads DSGGF. The interval 248–254 is RNA binding; it reads GVGKPDD. Catalysis depends on Asp267, which acts as the Nucleophile. Zn(2+)-binding residues include Cys305, Cys307, Cys310, and His336.

The protein belongs to the queuine tRNA-ribosyltransferase family. In terms of assembly, homodimer. Within each dimer, one monomer is responsible for RNA recognition and catalysis, while the other monomer binds to the replacement base PreQ1. Zn(2+) serves as cofactor.

It catalyses the reaction 7-aminomethyl-7-carbaguanine + guanosine(34) in tRNA = 7-aminomethyl-7-carbaguanosine(34) in tRNA + guanine. It functions in the pathway tRNA modification; tRNA-queuosine biosynthesis. Its function is as follows. Catalyzes the base-exchange of a guanine (G) residue with the queuine precursor 7-aminomethyl-7-deazaguanine (PreQ1) at position 34 (anticodon wobble position) in tRNAs with GU(N) anticodons (tRNA-Asp, -Asn, -His and -Tyr). Catalysis occurs through a double-displacement mechanism. The nucleophile active site attacks the C1' of nucleotide 34 to detach the guanine base from the RNA, forming a covalent enzyme-RNA intermediate. The proton acceptor active site deprotonates the incoming PreQ1, allowing a nucleophilic attack on the C1' of the ribose to form the product. After dissociation, two additional enzymatic reactions on the tRNA convert PreQ1 to queuine (Q), resulting in the hypermodified nucleoside queuosine (7-(((4,5-cis-dihydroxy-2-cyclopenten-1-yl)amino)methyl)-7-deazaguanosine). The sequence is that of Queuine tRNA-ribosyltransferase from Ruegeria sp. (strain TM1040) (Silicibacter sp.).